We begin with the raw amino-acid sequence, 431 residues long: Enolase (431 aa).

Q167 contributes to the (2R)-2-phosphoglycerate binding site. The active-site Proton donor is E209. Positions 246, 289, and 316 each coordinate Mg(2+). Positions 341, 370, 371, and 392 each coordinate (2R)-2-phosphoglycerate. K341 acts as the Proton acceptor in catalysis.

Belongs to the enolase family. In terms of assembly, component of the RNA degradosome, a multiprotein complex involved in RNA processing and mRNA degradation. Mg(2+) is required as a cofactor.

The protein resides in the cytoplasm. The protein localises to the secreted. Its subcellular location is the cell surface. The catalysed reaction is (2R)-2-phosphoglycerate = phosphoenolpyruvate + H2O. The protein operates within carbohydrate degradation; glycolysis; pyruvate from D-glyceraldehyde 3-phosphate: step 4/5. Catalyzes the reversible conversion of 2-phosphoglycerate (2-PG) into phosphoenolpyruvate (PEP). It is essential for the degradation of carbohydrates via glycolysis. The chain is Enolase from Shewanella oneidensis (strain ATCC 700550 / JCM 31522 / CIP 106686 / LMG 19005 / NCIMB 14063 / MR-1).